The following is a 180-amino-acid chain: ATP-dependent protease subunit HslV (180 aa).

Residue Thr7 is part of the active site. Na(+)-binding residues include Ala165, Cys168, and Thr171.

The protein belongs to the peptidase T1B family. HslV subfamily. As to quaternary structure, a double ring-shaped homohexamer of HslV is capped on each side by a ring-shaped HslU homohexamer. The assembly of the HslU/HslV complex is dependent on binding of ATP.

It is found in the cytoplasm. It catalyses the reaction ATP-dependent cleavage of peptide bonds with broad specificity.. With respect to regulation, allosterically activated by HslU binding. Functionally, protease subunit of a proteasome-like degradation complex believed to be a general protein degrading machinery. The protein is ATP-dependent protease subunit HslV of Geobacillus sp. (strain WCH70).